We begin with the raw amino-acid sequence, 158 residues long: MNVVQGNIESKNAKVAIVVSRFNSFVVDSLLDGAVDTLKRFGQVADENITVVKVPGAVELPLAARRVAASGKFDGIIALGAVIRGGTPHFDFVAGECNKGLAQVALEFDIPVSFGVLTTDTIEQAIERSGTKAGNKGGEAALGLLEMVNVLQALEEQL.

Residues Phe22, 57 to 59 (AVE), and 81 to 83 (AVI) each bind 5-amino-6-(D-ribitylamino)uracil. 86–87 (GT) provides a ligand contact to (2S)-2-hydroxy-3-oxobutyl phosphate. His89 acts as the Proton donor in catalysis. 5-amino-6-(D-ribitylamino)uracil is bound at residue Phe114. (2S)-2-hydroxy-3-oxobutyl phosphate is bound at residue Arg128.

This sequence belongs to the DMRL synthase family. As to quaternary structure, forms an icosahedral capsid composed of 60 subunits, arranged as a dodecamer of pentamers.

The catalysed reaction is (2S)-2-hydroxy-3-oxobutyl phosphate + 5-amino-6-(D-ribitylamino)uracil = 6,7-dimethyl-8-(1-D-ribityl)lumazine + phosphate + 2 H2O + H(+). It functions in the pathway cofactor biosynthesis; riboflavin biosynthesis; riboflavin from 2-hydroxy-3-oxobutyl phosphate and 5-amino-6-(D-ribitylamino)uracil: step 1/2. In terms of biological role, catalyzes the formation of 6,7-dimethyl-8-ribityllumazine by condensation of 5-amino-6-(D-ribitylamino)uracil with 3,4-dihydroxy-2-butanone 4-phosphate. This is the penultimate step in the biosynthesis of riboflavin. This is 6,7-dimethyl-8-ribityllumazine synthase from Shewanella pealeana (strain ATCC 700345 / ANG-SQ1).